We begin with the raw amino-acid sequence, 624 residues long: ABC transporter G family member 23 (624 aa).

The ABC transporter domain maps to 52 to 296; it reads LTVTNLSYTI…IAKLGFQIPE (245 aa). ATP is bound at residue 84 to 91; it reads GPSGTGKS. The ABC transmembrane type-2 domain occupies 350–560; it reads TEISYLCSRF…PLESMVVNEY (211 aa). The next 6 membrane-spanning stretches (helical) occupy residues 369-389, 402-422, 450-470, 480-500, 511-531, and 595-615; these read LFLA…SVYT, LGLF…ALPI, IAFV…VYWI, FSFF…LVLF, GNSL…YFIP, and INVG…WGIL.

Belongs to the ABC transporter superfamily. ABCG family. Eye pigment precursor importer (TC 3.A.1.204) subfamily.

It is found in the membrane. The chain is ABC transporter G family member 23 (ABCG23) from Arabidopsis thaliana (Mouse-ear cress).